The sequence spans 385 residues: MKKVSVFGSTGFIGKTTVGILSGNTEDFKVIALVAGSNVSLLAQQAKLLNAEMAVIADDAQYEELKRSLHGSGIRVAAGKEAVLEAAALSVDTAVMAITGIVALSAVMRLIESGVGTIALASKESVVCGGVLLRDAACKSGTRIVPVDSEHNAVFRLLSQGDNPYKITITASGGPFLHWSHDQLKSVTIEDALVHPVWKMGKKISVDSATMMNKALEVLEASYLFELGYRKIDVVIHPESIVHALAFYQDGTSTALMSLPDMSIPILHALYWPHRKEVSVREVDLIAYGKLTFIRPDFERFPALKAAFDILQSSERDVASIVFNAANEVAVESFLNSEITFLEIVNIVLHVMNKVPYGKVSSLADIMEYDLLGRCIAREVISDAS.

The NADPH site is built by T10, G11, I13, G36, and N38. Residue K123 coordinates 1-deoxy-D-xylulose 5-phosphate. E124 is an NADPH binding site. D148 is a Mn(2+) binding site. 1-deoxy-D-xylulose 5-phosphate contacts are provided by S149, E150, S172, and H195. E150 is a Mn(2+) binding site. NADPH is bound at residue G201. 1-deoxy-D-xylulose 5-phosphate-binding residues include S208, N213, K214, and E217. Position 217 (E217) interacts with Mn(2+).

Belongs to the DXR family. Mg(2+) is required as a cofactor. It depends on Mn(2+) as a cofactor.

The catalysed reaction is 2-C-methyl-D-erythritol 4-phosphate + NADP(+) = 1-deoxy-D-xylulose 5-phosphate + NADPH + H(+). The protein operates within isoprenoid biosynthesis; isopentenyl diphosphate biosynthesis via DXP pathway; isopentenyl diphosphate from 1-deoxy-D-xylulose 5-phosphate: step 1/6. Functionally, catalyzes the NADPH-dependent rearrangement and reduction of 1-deoxy-D-xylulose-5-phosphate (DXP) to 2-C-methyl-D-erythritol 4-phosphate (MEP). This Anaplasma phagocytophilum (strain HZ) protein is 1-deoxy-D-xylulose 5-phosphate reductoisomerase.